We begin with the raw amino-acid sequence, 459 residues long: Cysteine--tRNA ligase (459 aa).

Position 28 (C28) interacts with Zn(2+). A 'HIGH' region motif is present at residues 30-40 (VTIYDLCHIGH). Residues C209, H234, and E238 each contribute to the Zn(2+) site. A 'KMSKS' region motif is present at residues 266-270 (KMSKS). K269 serves as a coordination point for ATP.

Belongs to the class-I aminoacyl-tRNA synthetase family. Monomer. Zn(2+) serves as cofactor.

Its subcellular location is the cytoplasm. The enzyme catalyses tRNA(Cys) + L-cysteine + ATP = L-cysteinyl-tRNA(Cys) + AMP + diphosphate. The protein is Cysteine--tRNA ligase of Shewanella baltica (strain OS185).